Consider the following 109-residue polypeptide: Nucleoid-associated protein Ping_2276 (109 aa).

Belongs to the YbaB/EbfC family. As to quaternary structure, homodimer.

It is found in the cytoplasm. The protein resides in the nucleoid. Its function is as follows. Binds to DNA and alters its conformation. May be involved in regulation of gene expression, nucleoid organization and DNA protection. This is Nucleoid-associated protein Ping_2276 from Psychromonas ingrahamii (strain DSM 17664 / CCUG 51855 / 37).